Consider the following 242-residue polypeptide: UPF0246 protein SSA_1395 (242 aa).

The protein belongs to the UPF0246 family.

The protein is UPF0246 protein SSA_1395 of Streptococcus sanguinis (strain SK36).